Reading from the N-terminus, the 434-residue chain is D-amino acid dehydrogenase (434 aa).

3 to 17 (VVILGSGVVGVASAW) provides a ligand contact to FAD.

Belongs to the DadA oxidoreductase family. Requires FAD as cofactor.

It catalyses the reaction a D-alpha-amino acid + A + H2O = a 2-oxocarboxylate + AH2 + NH4(+). It functions in the pathway amino-acid degradation; D-alanine degradation; NH(3) and pyruvate from D-alanine: step 1/1. Oxidative deamination of D-amino acids. This Serratia proteamaculans (strain 568) protein is D-amino acid dehydrogenase.